Here is a 254-residue protein sequence, read N- to C-terminus: Cell wall biogenesis protein NCW2 (254 aa).

Residues 1-17 (MKACSILFTTLITLAAA) form the signal peptide. 3 disordered regions span residues 19–57 (KDSG…SAST), 111–143 (TSTA…DGPV), and 167–191 (ATTD…SSTK). The segment covering 27 to 42 (QNSEDSSQKESSNSQE) has biased composition (low complexity). The span at 43-57 (ITPTTTKEAQESAST) shows a compositional bias: polar residues. A compositionally biased stretch (low complexity) spans 111 to 139 (TSTASVQPTGETSSGITNSASSSTTSTST). The N-linked (GlcNAc...) asparagine glycan is linked to asparagine 229. A lipid anchor (GPI-anchor amidated asparagine) is attached at asparagine 232. A propeptide spans 233–254 (GAFAGTHIAYGAGAFAVGALLL) (removed in mature form).

The protein resides in the cell membrane. In terms of biological role, cell wall biogenesis protein that participates in the organization of the beta-glucan assembly. Involved in the mechanism responsible for cell tolerance to polyhexamethylene biguanide (PHMB), an antifungal agent. This is Cell wall biogenesis protein NCW2 from Saccharomyces cerevisiae (strain ATCC 204508 / S288c) (Baker's yeast).